The following is a 114-amino-acid chain: T cell receptor beta variable 4-1 (114 aa).

Positions 1-21 are cleaved as a signal peptide; the sequence is MGCRLLCCAVLCLLGAVPIDT. Residues 22–114 enclose the Ig-like domain; the sequence is EVTQTPKHLV…SALYLCASSQ (93 aa). Cys-42 and Cys-110 are oxidised to a cystine. Residues Asn-76 and Asn-89 are each glycosylated (N-linked (GlcNAc...) asparagine).

In terms of assembly, alpha-beta TR is a heterodimer composed of an alpha and beta chain; disulfide-linked. The alpha-beta TR is associated with the transmembrane signaling CD3 coreceptor proteins to form the TR-CD3 (TcR or TCR). The assembly of alpha-beta TR heterodimers with CD3 occurs in the endoplasmic reticulum where a single alpha-beta TR heterodimer associates with one CD3D-CD3E heterodimer, one CD3G-CD3E heterodimer and one CD247 homodimer forming a stable octameric structure. CD3D-CD3E and CD3G-CD3E heterodimers preferentially associate with TR alpha and TR beta chains, respectively. The association of the CD247 homodimer is the last step of TcR assembly in the endoplasmic reticulum and is required for transport to the cell surface.

It is found in the cell membrane. Functionally, v region of the variable domain of T cell receptor (TR) beta chain that participates in the antigen recognition. Alpha-beta T cell receptors are antigen specific receptors which are essential to the immune response and are present on the cell surface of T lymphocytes. Recognize peptide-major histocompatibility (MH) (pMH) complexes that are displayed by antigen presenting cells (APC), a prerequisite for efficient T cell adaptive immunity against pathogens. Binding of alpha-beta TR to pMH complex initiates TR-CD3 clustering on the cell surface and intracellular activation of LCK that phosphorylates the ITAM motifs of CD3G, CD3D, CD3E and CD247 enabling the recruitment of ZAP70. In turn ZAP70 phosphorylates LAT, which recruits numerous signaling molecules to form the LAT signalosome. The LAT signalosome propagates signal branching to three major signaling pathways, the calcium, the mitogen-activated protein kinase (MAPK) kinase and the nuclear factor NF-kappa-B (NF-kB) pathways, leading to the mobilization of transcription factors that are critical for gene expression and essential for T cell growth and differentiation. The T cell repertoire is generated in the thymus, by V-(D)-J rearrangement. This repertoire is then shaped by intrathymic selection events to generate a peripheral T cell pool of self-MH restricted, non-autoaggressive T cells. Post-thymic interaction of alpha-beta TR with the pMH complexes shapes TR structural and functional avidity. The polypeptide is T cell receptor beta variable 4-1 (Homo sapiens (Human)).